We begin with the raw amino-acid sequence, 366 residues long: Cell division protein FtsY homolog, chloroplastic (366 aa).

Residues 1 to 40 constitute a chloroplast transit peptide; that stretch reads MATSSAHLSFLAGRISPFSSERIGLFPLRGEFRPRMTRFR. GTP-binding positions include 171–178, 254–258, and 318–321; these read GVNGGGKT, DTSGR, and TKLD.

Belongs to the GTP-binding SRP family. In terms of assembly, monomer. Interacts with FFC/cpSRP54, a component of the cpSRP complex, composed of a FFC/cpSRP54 monomer and a CAO/cpSRP43 dimer. The complex with FFC/cpSRP54 is formed when both proteins are bound with GTP. Expressed in green tissues. Low levels in roots and seeds.

It localises to the plastid. The protein resides in the chloroplast stroma. The protein localises to the chloroplast thylakoid membrane. Signal recognition particle receptor protein. Binds GTP specifically. The GTPase activity is inhibited by the N-terminus of the protein until binding to the thylakoid membrane. Activates the GTPase activity of FFC/cpSRP54 when bound to the cpSRP complex. Required for light-harvesting chlorophyll a/b-binding protein (LHCP) integration into thylakoids. Might be also functionally linked to the Sec translocation machinery. The polypeptide is Cell division protein FtsY homolog, chloroplastic (CPFTSY) (Arabidopsis thaliana (Mouse-ear cress)).